Consider the following 383-residue polypeptide: MIISSTFDYRKAAKRRLPPFLFHYIDGGAYAEETMRRNYADLQALALRQRILRQVGEVDLSIKLFDQRLNLPIVLAPVGLTGMYARRGEVKAARAAVAKGIPFTLSSVSVCSLAEVHAEVGSGFWFQLYVLKDRGFMRDVLERSWLAGVRTLVFTVDMPVPGARYRDAHSGMSGPYAGLRRILQAVVHPHWAWNVGIMGRPHDLGNVSTYLQKKITLEDYVGWLGANFDPSIGWSDLQWIRDFWKGKMILKGILDPQDAREAVQFGADGIVVSNHGGRQLDGVLSTARALPAIAEVVTGDLTILADSGVRSGLDVVRMIAQGADAVMIGRAFIYALAAAGEKGVMHLLDLFANEMRVAMTLTGVRAVKEITHESLASTDALNQ.

The FMN hydroxy acid dehydrogenase domain occupies 1 to 380 (MIISSTFDYR…THESLASTDA (380 aa)). Tyrosine 24 contacts substrate. FMN is bound by residues serine 106 and glutamine 127. Tyrosine 129 is a binding site for substrate. Threonine 155 lines the FMN pocket. Residue arginine 164 coordinates substrate. Lysine 251 lines the FMN pocket. The active-site Proton acceptor is histidine 275. Arginine 278 serves as a coordination point for substrate. 306 to 330 (DSGVRSGLDVVRMIAQGADAVMIGR) contacts FMN.

The protein belongs to the FMN-dependent alpha-hydroxy acid dehydrogenase family. The cofactor is FMN.

The protein resides in the cell inner membrane. It catalyses the reaction (S)-lactate + A = pyruvate + AH2. Catalyzes the conversion of L-lactate to pyruvate. Is coupled to the respiratory chain. This is L-lactate dehydrogenase from Bartonella quintana (strain Toulouse) (Rochalimaea quintana).